Reading from the N-terminus, the 323-residue chain is Tetraacyldisaccharide 4'-kinase (323 aa).

56-63 contributes to the ATP binding site; it reads TVGGVGKT.

This sequence belongs to the LpxK family.

The enzyme catalyses a lipid A disaccharide + ATP = a lipid IVA + ADP + H(+). It functions in the pathway glycolipid biosynthesis; lipid IV(A) biosynthesis; lipid IV(A) from (3R)-3-hydroxytetradecanoyl-[acyl-carrier-protein] and UDP-N-acetyl-alpha-D-glucosamine: step 6/6. Transfers the gamma-phosphate of ATP to the 4'-position of a tetraacyldisaccharide 1-phosphate intermediate (termed DS-1-P) to form tetraacyldisaccharide 1,4'-bis-phosphate (lipid IVA). This Legionella pneumophila (strain Corby) protein is Tetraacyldisaccharide 4'-kinase.